The chain runs to 151 residues: UPF0719 transmembrane protein MAP_1032c (151 aa).

4 helical membrane passes run 20 to 40 (VATI…FYAV), 60 to 80 (AVVV…TAIA), 90 to 110 (LVGV…ALLA), and 130 to 150 (PGSF…AAAV).

This sequence belongs to the UPF0719 family.

The protein localises to the cell membrane. This chain is UPF0719 transmembrane protein MAP_1032c, found in Mycolicibacterium paratuberculosis (strain ATCC BAA-968 / K-10) (Mycobacterium paratuberculosis).